Here is a 136-residue protein sequence, read N- to C-terminus: Sec-independent protein translocase protein TatB (136 aa).

Residues 1–21 (MFDIGFWELVLISVIGLVVLG) traverse the membrane as a helical segment. The interval 66–136 (ASKQGLSDLD…TTPPRQDKNE (71 aa)) is disordered. Basic and acidic residues-rich tracts occupy residues 77–89 (ELQK…KETA) and 96–107 (YKKDIDDIKTSL). Over residues 108–130 (DKNPSGTTQQENSILDSSKTTPP) the composition is skewed to polar residues.

It belongs to the TatB family. The Tat system comprises two distinct complexes: a TatABC complex, containing multiple copies of TatA, TatB and TatC subunits, and a separate TatA complex, containing only TatA subunits. Substrates initially bind to the TatABC complex, which probably triggers association of the separate TatA complex to form the active translocon.

The protein resides in the cell inner membrane. Part of the twin-arginine translocation (Tat) system that transports large folded proteins containing a characteristic twin-arginine motif in their signal peptide across membranes. Together with TatC, TatB is part of a receptor directly interacting with Tat signal peptides. TatB may form an oligomeric binding site that transiently accommodates folded Tat precursor proteins before their translocation. The chain is Sec-independent protein translocase protein TatB from Psychromonas ingrahamii (strain DSM 17664 / CCUG 51855 / 37).